Reading from the N-terminus, the 129-residue chain is Basic blue protein (129 aa).

A signal peptide spans 1–33 (MAKGRGSASWSARAIVTLMAVSVLLLQADYVQA). Residues 34–129 (ATYTVGDSGI…SDMKIAVTAV (96 aa)) enclose the Phytocyanin domain. Cu cation contacts are provided by H72, C112, H117, and M122. C85 and C118 are oxidised to a cystine.

In terms of tissue distribution, expressed in the inflorescence and in the transmitting tract of the pistil. Detected in roots, stems, cauline leaves, cotyledons, hypocotyls, guard cells, pistils, sepals, stamen filaments and vascular bundles of roots but not of leaves. Not expressed in petals, anthers or pollen.

The protein resides in the secreted. It localises to the extracellular space. Its subcellular location is the extracellular matrix. In terms of biological role, forms a concentration gradient along the pollen tube growth path, with a lower level in the stigma papilla cell wall and a higher level in the transmitting tract extracellular matix of the style. The protein is Basic blue protein (ARPN) of Arabidopsis thaliana (Mouse-ear cress).